Reading from the N-terminus, the 518-residue chain is MFS-type transporter cnsO (518 aa).

Residues 1–13 show a composition bias toward polar residues; sequence MESTDSSPPLSMT. A disordered region spans residues 1–24; sequence MESTDSSPPLSMTDTEKKGDAVTT. Transmembrane regions (helical) follow at residues 99 to 119, 122 to 142, 156 to 176, 187 to 207, 221 to 241, 298 to 318, 334 to 354, 362 to 382, and 392 to 412; these read LALM…NIML, VGPK…TTLT, LMLG…LSMW, AIFY…AYGV, WLFL…LFCL, FMMM…SYTL, VMTT…GYIS, LCIM…WITV, and YFAI…VGAW. An N-linked (GlcNAc...) asparagine glycan is attached at asparagine 416. A run of 2 helical transmembrane segments spans residues 427–447 and 455–475; these read IGLL…NIYI and PLGF…PATI.

This sequence belongs to the major facilitator superfamily.

It is found in the cell membrane. In terms of biological role, MFS-type transporter; part of the gene cluster that mediates the biosynthesis of communesins, a prominent class of indole alkaloids with great potential as pharmaceuticals. With the MFS transporter cnsL, is most likely responsible for cummunesins secretion and thereby may contribute to intrinsic resistance. The protein is MFS-type transporter cnsO of Penicillium expansum (Blue mold rot fungus).